A 1036-amino-acid polypeptide reads, in one-letter code: Cysteine-rich motor neuron 1 protein (1036 aa).

An N-terminal signal peptide occupies residues 1–34; that stretch reads MYLVAGDRGLAGCGHLLVSLLGLLLLLARSGTRA. Residues 35–112 form the IGFBP N-terminal domain; that stretch reads LVCLPCDESK…EYEAGVCEDE (78 aa). Over 35–939 the chain is Extracellular; it reads LVCLPCDESK…HPSEDSSLDS (905 aa). 4 cysteine pairs are disulfide-bonded: cysteine 37–cysteine 60, cysteine 40–cysteine 62, cysteine 45–cysteine 63, and cysteine 51–cysteine 66. An N-linked (GlcNAc...) asparagine glycan is attached at asparagine 71. 2 disulfides stabilise this stretch: cysteine 74/cysteine 90 and cysteine 84/cysteine 109. A glycan (N-linked (GlcNAc...) asparagine) is linked at asparagine 113. The Cell attachment site signature appears at 314–316; it reads RGD. The N-linked (GlcNAc...) asparagine glycan is linked to asparagine 330. VWFC domains are found at residues 334-391 and 401-457; these read PACV…PVCE and AGCY…PVCE. Antistasin-like domains follow at residues 469–498, 505–532, 539–564, and 567–592; these read CGEL…TCQC, CSER…ICEC, CRPI…ICRC, and CPEL…ICKC. The N-linked (GlcNAc...) asparagine glycan is linked to asparagine 474. VWFC domains follow at residues 606–663 and 677–735; these read GTCL…PSCA and SICH…PQCT. The N-linked (GlcNAc...) asparagine glycan is linked to asparagine 746. VWFC domains follow at residues 751–809 and 817–874; these read NYCK…PYCI and VVCH…PMCP. Residues 940–960 form a helical membrane-spanning segment; it reads IASVVVPIIICLSIIIAFLFI. The Cytoplasmic portion of the chain corresponds to 961–1036; the sequence is NQKKQWIPLL…LQADNFYQTV (76 aa). Residue threonine 1035 is modified to Phosphothreonine.

As to quaternary structure, interacts with BMP4 and BMP7. Post-translationally, N-glycosylated. As to expression, expressed in pancreas, kidney, skeletal muscle, lung, placenta, brain, heart, spleen, liver and small intestine. Expressed in blood vessels (at protein level).

It localises to the secreted. The protein resides in the cell membrane. Functionally, may play a role in CNS development by interacting with growth factors implicated in motor neuron differentiation and survival. May play a role in capillary formation and maintenance during angiogenesis. Modulates BMP activity by affecting its processing and delivery to the cell surface. The polypeptide is Cysteine-rich motor neuron 1 protein (CRIM1) (Homo sapiens (Human)).